Consider the following 74-residue polypeptide: Protein SlyX homolog (74 aa).

It belongs to the SlyX family.

This Aliivibrio fischeri (strain ATCC 700601 / ES114) (Vibrio fischeri) protein is Protein SlyX homolog.